We begin with the raw amino-acid sequence, 270 residues long: Electron transfer flavoprotein subunit beta (270 aa).

Belongs to the ETF alpha-subunit/FixB family. As to quaternary structure, heterodimer of an alpha and a beta subunit. It depends on FAD as a cofactor.

Its function is as follows. The electron transfer flavoprotein serves as a specific electron acceptor for other dehydrogenases. It transfers the electrons to the main respiratory chain via ETF-ubiquinone oxidoreductase (ETF dehydrogenase). In Megasphaera elsdenii, this protein is Electron transfer flavoprotein subunit beta (etfB).